A 518-amino-acid polypeptide reads, in one-letter code: Maturase K (518 aa).

This sequence belongs to the intron maturase 2 family. MatK subfamily.

It localises to the plastid. The protein resides in the chloroplast. Its function is as follows. Usually encoded in the trnK tRNA gene intron. Probably assists in splicing its own and other chloroplast group II introns. This Syzygium cumini (Java plum) protein is Maturase K.